The sequence spans 479 residues: Ribosomal RNA small subunit methyltransferase F (479 aa).

S-adenosyl-L-methionine contacts are provided by residues 125 to 131, glutamate 149, aspartate 176, and aspartate 194; that span reads AAAPGSK. The Nucleophile role is filled by cysteine 247.

This sequence belongs to the class I-like SAM-binding methyltransferase superfamily. RsmB/NOP family.

It is found in the cytoplasm. It carries out the reaction cytidine(1407) in 16S rRNA + S-adenosyl-L-methionine = 5-methylcytidine(1407) in 16S rRNA + S-adenosyl-L-homocysteine + H(+). Its function is as follows. Specifically methylates the cytosine at position 1407 (m5C1407) of 16S rRNA. The protein is Ribosomal RNA small subunit methyltransferase F of Salmonella agona (strain SL483).